The following is a 236-amino-acid chain: 2-C-methyl-D-erythritol 4-phosphate cytidylyltransferase (236 aa).

Belongs to the IspD/TarI cytidylyltransferase family. IspD subfamily.

The catalysed reaction is 2-C-methyl-D-erythritol 4-phosphate + CTP + H(+) = 4-CDP-2-C-methyl-D-erythritol + diphosphate. Its pathway is isoprenoid biosynthesis; isopentenyl diphosphate biosynthesis via DXP pathway; isopentenyl diphosphate from 1-deoxy-D-xylulose 5-phosphate: step 2/6. In terms of biological role, catalyzes the formation of 4-diphosphocytidyl-2-C-methyl-D-erythritol from CTP and 2-C-methyl-D-erythritol 4-phosphate (MEP). The polypeptide is 2-C-methyl-D-erythritol 4-phosphate cytidylyltransferase (Burkholderia cenocepacia (strain ATCC BAA-245 / DSM 16553 / LMG 16656 / NCTC 13227 / J2315 / CF5610) (Burkholderia cepacia (strain J2315))).